The following is a 175-amino-acid chain: Enhancer of mRNA-decapping protein 1 (175 aa).

Residues 1–27 (MSTDTMYFNSSRLLPSAGRNKTNNLIK) are compositionally biased toward polar residues. Disordered regions lie at residues 1–113 (MSTD…KDDT) and 155–175 (GSTF…PSFL). Residue S2 is modified to N-acetylserine. Positions 35–47 (ARGNAAKNANNNN) are enriched in low complexity. The span at 58-77 (LPNGQKPNFGHSSNKKPSFN) shows a compositional bias: polar residues. S82 is modified (phosphoserine). Over residues 100 to 113 (NNKETPRQNNKDDT) the composition is skewed to basic and acidic residues.

Belongs to the EDC family.

The protein localises to the cytoplasm. Functionally, mRNA-binding protein which stimulates mRNA decapping by DCP1 and DCP2. Involved in the regulation of expression of multiple genes involved in glycolysis and gluconeogenesis. The chain is Enhancer of mRNA-decapping protein 1 (EDC1) from Saccharomyces cerevisiae (strain ATCC 204508 / S288c) (Baker's yeast).